Reading from the N-terminus, the 89-residue chain is Small ribosomal subunit protein uS19 (89 aa).

The protein belongs to the universal ribosomal protein uS19 family.

In terms of biological role, protein S19 forms a complex with S13 that binds strongly to the 16S ribosomal RNA. This Vesicomyosocius okutanii subsp. Calyptogena okutanii (strain HA) protein is Small ribosomal subunit protein uS19.